Consider the following 76-residue polypeptide: MDNSAQKSCSYTPVACYNAYTPAQQGFYVVPDYQTYGYQTLTSARAGALPSCSRYFSVQNAYGSCSTMSYVRKDCI.

Belongs to the IIV-6 342R family.

This is an uncharacterized protein from Invertebrate iridescent virus 3 (IIV-3).